The primary structure comprises 409 residues: MAREKFERTKPHVNIGTIGHVDHGKTTLTAAITATLALDGNAKVKDYPDIDGAPEERARGITINTAHVEYETENGHYAHVDCPGHADYVKNMITGAAQMDGAILVVSAADGPMPQTREHILLSKQVGVPDIVVFLNKEDQVDDAELLELVELEVRELLSAYDFQVMTFRFAPGSALQAIEAISSNPAIKRGDNPWVDKIFALMDAVDEYIPTPERDIEKTFLMAIEDVFSITGRGTVATGRIERGVVKVGDTVEIVGVGDTQTTTITGIEMFQKTLDEGFAGDNVGILLRGVTREDIEAGMVLSEPGTITPHTNFESEVYVLTKDEGGRHTPFFTGYRPQFYVRTTDVTGAITQFTADDGSIVEMVMPGDRIKMTAELIYPVAIEEGMRFAIREGGRTIGAGVVSKIIQ.

Residues 10–214 form the tr-type G domain; sequence KPHVNIGTIG…AVDEYIPTPE (205 aa). Residues 19–26 form a G1 region; the sequence is GHVDHGKT. Position 19 to 26 (19 to 26) interacts with GTP; it reads GHVDHGKT. Thr26 contacts Mg(2+). A G2 region spans residues 60 to 64; it reads GITIN. The tract at residues 81–84 is G3; sequence DCPG. GTP contacts are provided by residues 81–85 and 136–139; these read DCPGH and NKED. The tract at residues 136–139 is G4; that stretch reads NKED. The segment at 174–176 is G5; it reads SAL.

It belongs to the TRAFAC class translation factor GTPase superfamily. Classic translation factor GTPase family. EF-Tu/EF-1A subfamily.

It localises to the plastid. The protein localises to the chloroplast. It carries out the reaction GTP + H2O = GDP + phosphate + H(+). Functionally, GTP hydrolase that promotes the GTP-dependent binding of aminoacyl-tRNA to the A-site of ribosomes during protein biosynthesis. The polypeptide is Elongation factor Tu, chloroplastic (tufA) (Trieres chinensis (Marine centric diatom)).